The following is an 834-amino-acid chain: Glycerol-3-phosphate acyltransferase (834 aa).

The short motif at 309 to 314 is the HXXXXD motif element; that stretch reads CHRSHI.

This sequence belongs to the GPAT/DAPAT family.

It localises to the cell inner membrane. The enzyme catalyses sn-glycerol 3-phosphate + an acyl-CoA = a 1-acyl-sn-glycero-3-phosphate + CoA. Its pathway is phospholipid metabolism; CDP-diacylglycerol biosynthesis; CDP-diacylglycerol from sn-glycerol 3-phosphate: step 1/3. The protein is Glycerol-3-phosphate acyltransferase of Pseudomonas aeruginosa (strain LESB58).